We begin with the raw amino-acid sequence, 621 residues long: Growth factor receptor-bound protein 10 (621 aa).

Polar residues-rich tracts occupy residues 1–23 and 33–59; these read MNND…SDTD and HASN…QRSQ. The interval 1–118 is disordered; the sequence is MNNDINSSVE…PSQPPAKHCG (118 aa). Residues Ser50 and Ser96 each carry the phosphoserine modification. Residues 95–112 are compositionally biased toward pro residues; it reads GSPPSVAPSSLPPPPSQP. One can recognise a Ras-associating domain in the interval 194–278; the sequence is LRKDVKVFSE…SKFLFRKNYA (85 aa). One can recognise a PH domain in the interval 318 to 427; sequence CPEIQGFLQV…WMTAFRLLKY (110 aa). Ser455 is modified (phosphoserine; by MTOR and PKB/AKT1). Ser458 and Ser503 each carry phosphoserine. The region spanning 520–601 is the SH2 domain; the sequence is WFHGRISREE…SDLIQLVDFY (82 aa).

This sequence belongs to the GRB7/10/14 family. In terms of assembly, interacts with ligand-activated tyrosine kinase receptors, including FGFR1, INSR, IGF1R, MET and PDGFRB in a phosphotyrosine-dependent manner through the SH2 domain. Poorly binds to the EGFR. Directly interacts with MAP3K14/NIK and is recruited to the EGFR-ERBB2 complex. Interacts with GIGYF1/PERQ1 and GIGYF2/TNRC15. When unphosphorylated, interacts with AKT1 and when phosphorylated with YWHAE/14-3-3 epsilon. Interacts with NEDD4. Interacts with LRP6, thus interfering with the binding of AXIN1 to LRP6. Binds to activated NRAS. Phosphorylated on serine residues upon EGF, FGF and PDGF stimulation. In terms of tissue distribution, widely expressed.

Its subcellular location is the cytoplasm. With respect to regulation, phosphorylation by mTORC1 stabilizes and activates GRB10 constituting a feedback pathway by which mTORC1 inhibits INSR-dependent signaling. Its function is as follows. Adapter protein which modulates coupling of a number of cell surface receptor kinases with specific signaling pathways. Binds to, and suppress signals from, activated receptors tyrosine kinases, including the insulin (INSR) and insulin-like growth factor (IGF1R) receptors. The inhibitory effect can be achieved by 2 mechanisms: interference with the signaling pathway and increased receptor degradation. Delays and reduces AKT1 phosphorylation in response to insulin stimulation. Blocks association between INSR and IRS1 and IRS2 and prevents insulin-stimulated IRS1 and IRS2 tyrosine phosphorylation. Recruits NEDD4 to IGF1R, leading to IGF1R ubiquitination, increased internalization and degradation by both the proteasomal and lysosomal pathways. A similar role in the mediation of ubiquitination also has been suggested with INSR. Negatively regulates Wnt signaling by interacting with LRP6 intracellular portion and interfering with the binding of AXIN1 to LRP6. Positive regulator of the KDR/VEGFR-2 signaling pathway. May inhibit NEDD4-mediated degradation of KDR/VEGFR-2. The protein is Growth factor receptor-bound protein 10 (Grb10) of Mus musculus (Mouse).